The following is a 717-amino-acid chain: MAATAAVPGAAAGRASKRGGGGSGGGGTQGAEEEPPPPLQAVLVADSFNRRFFPISKDQPRVLLPLANVALIDYTLEFLTATGVQETFVFCCWKAAQIKEHLQKSKWCHPTSPNVVRIITSELYRSLGDVLRDVDAKALVRSDFLLIYGDVISNINICRALEEHRLRRKLEKNVSVMTMVFKESSPSHPTRCHEDNVVMAVDSATNRVLHFQKTQGLRRFSFPLSLFQGSGDGVEIRYDLLDCHISICSPQVAQLFTDNFDYQTRDDFVRGILMNEEVLGNQIHLHVTTREYGARVSNLHMYSAVCADVIRRWVYPLTPEVNFTDSTTQSYTHSRHNIYRGPEVSLGHGSVLEENVLLGAGTVIGSNCSITNSVIGPNCHIGDNVVLDQAYLWQGVRVAAGAQIHQSLLCDRAEVKERVKLKPYCVLTSQVVVGPDITLPEGSVISLHPPDAEEDEDDGQFSDDSGADQEKEKVKLKGYNPAEVGLEGQGYLWKAEGVNSKEDEELRQSLWGLMIKTEEESETESEGSVDPEELDSRAGSPQLDDIRVFQNEVLGTLQRGREENISCENLVLEINSLKHAYNISLKEVMQVLTLVVLEFPLQQVDGLLDPNRYCALLLPLLKAWSPVLRNYIKRAADHLEALAAIEDFFLEHETLVTSMAKVLMAFYQLEILAEETILSWFSQRDTTDEGQQLRKNQQLQRFIQWLREAEEESSEDD.

A compositionally biased stretch (low complexity) spans Met-1 to Arg-14. The tract at residues Met-1–Pro-37 is disordered. At Arg-18 the chain carries Omega-N-methylarginine. Residues Arg-18–Gln-29 are compositionally biased toward gly residues. Ser-23 carries the post-translational modification Phosphoserine. Glycyl lysine isopeptide (Lys-Gly) (interchain with G-Cter in ubiquitin) cross-links involve residues Lys-57 and Lys-99. Residue Ser-126 is modified to Phosphoserine. Glycyl lysine isopeptide (Lys-Gly) (interchain with G-Cter in ubiquitin) cross-links involve residues Lys-137 and Lys-213. Residue Thr-318 is modified to Phosphothreonine. Residues Gly-442–Tyr-479 form a disordered region. A phosphoserine mark is found at Ser-446, Ser-462, and Ser-465. The segment covering Ala-452–Ala-467 has biased composition (acidic residues). Lys-501 participates in a covalent cross-link: Glycyl lysine isopeptide (Lys-Gly) (interchain with G-Cter in ubiquitin). The interval Thr-517–Ala-538 is disordered. Residues Glu-519 to Glu-533 are compositionally biased toward acidic residues. Phosphoserine occurs at positions 528 and 536. The W2 domain occupies Gly-539–Asp-716. Position 540 is a phosphoserine; by DYRK2 (Ser-540). Ser-713 is subject to Phosphoserine.

Belongs to the eIF-2B gamma/epsilon subunits family. Component of the translation initiation factor 2B (eIF2B) complex which is a heterodecamer of two sets of five different subunits: alpha, beta, gamma, delta and epsilon. Subunits alpha, beta and delta comprise a regulatory subcomplex and subunits epsilon and gamma comprise a catalytic subcomplex. Within the complex, the hexameric regulatory complex resides at the center, with the two heterodimeric catalytic subcomplexes bound on opposite sides. In terms of processing, phosphorylated at Ser-540 by DYRK2; this is required for subsequent phosphorylation by GSK3B. Phosphorylated on serine and threonine residues by GSK3B; phosphorylation inhibits its function. Polyubiquitinated, probably by NEDD4.

It is found in the cytoplasm. Its subcellular location is the cytosol. Activated by the chemical integrated stress response (ISR) inhibitor ISRIB which stimulates guanine nucleotide exchange factor activity for both phosphorylated and unphosphorylated eIF2. Acts as a component of the translation initiation factor 2B (eIF2B) complex, which catalyzes the exchange of GDP for GTP on eukaryotic initiation factor 2 (eIF2) gamma subunit. Its guanine nucleotide exchange factor activity is repressed when bound to eIF2 complex phosphorylated on the alpha subunit, thereby limiting the amount of methionyl-initiator methionine tRNA available to the ribosome and consequently global translation is repressed. The chain is Translation initiation factor eIF2B subunit epsilon (Eif2b5) from Mus musculus (Mouse).